Reading from the N-terminus, the 335-residue chain is Pregnancy-specific beta-1-glycoprotein 11 (335 aa).

Positions 1 to 34 (MGPLSAPPCTEHIKWKGLLLTALLLNFWNLPTTA) are cleaved as a signal peptide. The Ig-like V-type domain occupies 35–144 (QVMIEAQPPK…TGYFTFTLYL (110 aa)). Asn61, Asn104, and Asn111 each carry an N-linked (GlcNAc...) asparagine glycan. A Cell attachment site motif is present at residues 127–129 (RGD). Ig-like C2-type domains lie at 147-234 (PKPS…VTLN) and 242-317 (PRIF…TSLT). Disulfide bonds link Cys169-Cys217 and Cys261-Cys301.

The protein belongs to the immunoglobulin superfamily. CEA family.

It localises to the secreted. This chain is Pregnancy-specific beta-1-glycoprotein 11 (PSG11), found in Homo sapiens (Human).